A 241-amino-acid polypeptide reads, in one-letter code: Small ribosomal subunit protein bS6 (241 aa).

A compositionally biased stretch (basic residues) spans 97-108 (KPKIRERNRKYT). Disordered regions lie at residues 97–187 (KPKI…HREN) and 199–241 (NKNH…QSSN). Over residues 109–118 (PRRDRFDKPN) the composition is skewed to basic and acidic residues. Composition is skewed to low complexity over residues 130 to 151 (QDQQATKNQQNFQQNQQNQTSQ), 161 to 180 (DDFQQVSSNQQNFRQNQQNQ), and 199 to 210 (NKNHQNQTSQTQ).

The protein belongs to the bacterial ribosomal protein bS6 family.

Binds together with bS18 to 16S ribosomal RNA. This Mesomycoplasma hyopneumoniae (strain 7448) (Mycoplasma hyopneumoniae) protein is Small ribosomal subunit protein bS6.